A 217-amino-acid chain; its full sequence is Outer-membrane lipoprotein LolB (217 aa).

The first 20 residues, 1–20 (MSKTVRTLALGGLVLAGLSA), serve as a signal peptide directing secretion. Cys-21 carries N-palmitoyl cysteine lipidation. Cys-21 is lipidated: S-diacylglycerol cysteine. A disordered region spans residues 105-124 (DTTSGAGRLEGLEGGPRSGP).

This sequence belongs to the LolB family. As to quaternary structure, monomer.

It is found in the cell outer membrane. Its function is as follows. Plays a critical role in the incorporation of lipoproteins in the outer membrane after they are released by the LolA protein. The polypeptide is Outer-membrane lipoprotein LolB (Xanthomonas axonopodis pv. citri (strain 306)).